A 473-amino-acid polypeptide reads, in one-letter code: Sun domain-containing protein 1 (473 aa).

The disordered stretch occupies residues 1–47 (MALRHTISPQFSNRHSPPVTRSVSRTGVHQPLDTSTPVTRRDSQPGT). Residues 7–47 (ISPQFSNRHSPPVTRSVSRTGVHQPLDTSTPVTRRDSQPGT) show a composition bias toward polar residues. Coiled-coil stretches lie at residues 163–191 (ISNL…LENV) and 204–235 (EELK…STKI). The interval 237–257 (HSTPEKAPETAPTASLPPSSQ) is disordered. Positions 248 to 257 (PTASLPPSSQ) are enriched in polar residues. A helical membrane pass occupies residues 262-282 (HITRRALLGVNVANSLIGASI). The SUN domain maps to 279–443 (GASIDHSCSS…YLIRVYGEPV (165 aa)). The interval 443-473 (VDPPKETQPMTDNGTESKLESAIVNSVSETA) is disordered.

It is found in the nucleus membrane. The protein resides in the nucleus envelope. Its function is as follows. Involved in centrosome attachment to the nucleus. Required for zyg-12 localization to the nuclear envelope. Together with pot-1, it is required to anchor telomeres to the nuclear envelope in embryos. The polypeptide is Sun domain-containing protein 1 (Caenorhabditis elegans).